We begin with the raw amino-acid sequence, 136 residues long: Large ribosomal subunit protein uL22 (136 aa).

This sequence belongs to the universal ribosomal protein uL22 family. In terms of assembly, part of the 50S ribosomal subunit.

Its function is as follows. This protein binds specifically to 23S rRNA; its binding is stimulated by other ribosomal proteins, e.g. L4, L17, and L20. It is important during the early stages of 50S assembly. It makes multiple contacts with different domains of the 23S rRNA in the assembled 50S subunit and ribosome. In terms of biological role, the globular domain of the protein is located near the polypeptide exit tunnel on the outside of the subunit, while an extended beta-hairpin is found that lines the wall of the exit tunnel in the center of the 70S ribosome. This is Large ribosomal subunit protein uL22 from Bacteroides fragilis (strain ATCC 25285 / DSM 2151 / CCUG 4856 / JCM 11019 / LMG 10263 / NCTC 9343 / Onslow / VPI 2553 / EN-2).